The chain runs to 353 residues: tRNA-specific 2-thiouridylase MnmA (353 aa).

Residues 7–14 (GLSGGVDS) and Leu-33 contribute to the ATP site. Cys-94 (nucleophile) is an active-site residue. Residues Cys-94 and Cys-193 are joined by a disulfide bond. Residue Gly-119 participates in ATP binding. Residues 143 to 145 (KDQ) are interaction with tRNA. Residue Cys-193 is the Cysteine persulfide intermediate of the active site. The interval 298 to 299 (RY) is interaction with tRNA.

The protein belongs to the MnmA/TRMU family.

It is found in the cytoplasm. The enzyme catalyses S-sulfanyl-L-cysteinyl-[protein] + uridine(34) in tRNA + AH2 + ATP = 2-thiouridine(34) in tRNA + L-cysteinyl-[protein] + A + AMP + diphosphate + H(+). Catalyzes the 2-thiolation of uridine at the wobble position (U34) of tRNA, leading to the formation of s(2)U34. The sequence is that of tRNA-specific 2-thiouridylase MnmA from Picosynechococcus sp. (strain ATCC 27264 / PCC 7002 / PR-6) (Agmenellum quadruplicatum).